An 898-amino-acid chain; its full sequence is Protein translocase subunit SecA (898 aa).

ATP-binding positions include Q87, 105 to 109 (GEGKT), and D512. Residues 855 to 865 (MQYQNNEGTSS) are compositionally biased toward polar residues. The tract at residues 855-898 (MQYQNNEGTSSLHEKSEHKIGRNESCPCGSGKKYKHCHGSKAKY) is disordered. A compositionally biased stretch (basic and acidic residues) spans 866-876 (LHEKSEHKIGR). Zn(2+)-binding residues include C880, C882, C891, and H892. Basic residues predominate over residues 886 to 898 (KKYKHCHGSKAKY).

The protein belongs to the SecA family. In terms of assembly, monomer and homodimer. Part of the essential Sec protein translocation apparatus which comprises SecA, SecYEG and auxiliary proteins SecDF-YajC and YidC. Zn(2+) serves as cofactor.

It localises to the cell inner membrane. Its subcellular location is the cytoplasm. The catalysed reaction is ATP + H2O + cellular proteinSide 1 = ADP + phosphate + cellular proteinSide 2.. Its function is as follows. Part of the Sec protein translocase complex. Interacts with the SecYEG preprotein conducting channel. Has a central role in coupling the hydrolysis of ATP to the transfer of proteins into and across the cell membrane, serving both as a receptor for the preprotein-SecB complex and as an ATP-driven molecular motor driving the stepwise translocation of polypeptide chains across the membrane. This is Protein translocase subunit SecA from Histophilus somni (strain 129Pt) (Haemophilus somnus).